Here is an 866-residue protein sequence, read N- to C-terminus: Interleukin-17 receptor A (866 aa).

The first 32 residues, 1-32, serve as a signal peptide directing secretion; it reads MGAARSPPSAVPGPLLGLLLLLLGVLAPGGAS. Over 33 to 320 the chain is Extracellular; it reads LRLLDHRALV…EPIPDYMPLW (288 aa). Cys-43 and Cys-50 are joined by a disulfide. N-linked (GlcNAc...) asparagine glycans are attached at residues Asn-49, Asn-54, and Asn-67. 2 cysteine pairs are disulfide-bonded: Cys-57–Cys-126 and Cys-185–Cys-196. Residues Asn-206, Asn-225, Asn-242, and Asn-265 are each glycosylated (N-linked (GlcNAc...) asparagine). 3 disulfide bridges follow: Cys-245-Cys-276, Cys-277-Cys-303, and Cys-290-Cys-294. The helical transmembrane segment at 321-341 threads the bilayer; that stretch reads VYWFITGISILLVGSVILLIV. At 342–866 the chain is on the cytoplasmic side; sequence CMTWRLAGPG…MGSESEGPSA (525 aa). Residues 377–534 enclose the SEFIR domain; the sequence is PRKVWIIYSA…LMDRFEEVYF (158 aa). A phosphoserine mark is found at Ser-708 and Ser-736. 2 disordered regions span residues 717 to 736 and 773 to 840; these read LFLPVDPEDSPLGSSTPMAS and MVLT…RSLQ. The span at 788 to 801 shows a compositional bias: polar residues; that stretch reads QSVQSDQGYISRSS. The span at 809 to 819 shows a compositional bias: acidic residues; that stretch reads TEMEEEEEEEQ.

In terms of assembly, forms heterodimers with IL17RC; the heterodimer binds IL17A and IL17F homodimers as well as the heterodimer formed by IL17A and IL17F. Forms complexes with 2:1 binding stoichiometry: two receptor chains for one interleukin molecule. IL17A homodimer preferentially drives the formation of IL17RA-IL17RC heterodimeric receptor complex, whereas IL17F homodimer forms predominantly complexes with IL17RC homodimer. IL17A homodimer adopts an asymmetrical ternary structure with one IL17RA molecule, allowing for high affinity interactions of one IL17A monomer with one IL17RA molecule (via D1 and D2 domains), while disfavoring binding of a second IL17RA molecule on the other IL17A monomer. IL17A-IL17F forms complexes with IL17RA-IL17RC, but with lower affinity when compared to IL17A homodimer. IL17RA chain cannot distinguish between IL17A and IL17F molecules, potentially enabling the formation of topologically distinct complexes. Interacts with TRAF3IP2. Forms heterodimers with IL17RE; the heterodimer binds IL17C. (Microbial infection) Interacts with SARS coronavirus-2/SARS-CoV-2 virus protein ORF8. Glycosylated. As to expression, widely expressed.

The protein localises to the cell membrane. Its subcellular location is the secreted. Functionally, receptor for IL17A and IL17F, major effector cytokines of innate and adaptive immune system involved in antimicrobial host defense and maintenance of tissue integrity. Receptor for IL17A. Receptor for IL17F. Binds to IL17A with higher affinity than to IL17F. Binds IL17A and IL17F homodimers as part of a heterodimeric complex with IL17RC. Also binds heterodimers formed by IL17A and IL17F as part of a heterodimeric complex with IL17RC. Cytokine binding triggers homotypic interaction of IL17RA and IL17RC chains with TRAF3IP2 adapter, leading to TRAF6-mediated activation of NF-kappa-B and MAPkinase pathways, ultimately resulting in transcriptional activation of cytokines, chemokines, antimicrobial peptides and matrix metalloproteinases, with potential strong immune inflammation. Involved in antimicrobial host defense primarily promoting neutrophil activation and recruitment at infection sites to destroy extracellular bacteria and fungi. In secondary lymphoid organs, contributes to germinal center formation by regulating the chemotactic response of B cells to CXCL12 and CXCL13, enhancing retention of B cells within the germinal centers, B cell somatic hypermutation rate and selection toward plasma cells. Plays a role in the maintenance of the integrity of epithelial barriers during homeostasis and pathogen infection. Stimulates the production of antimicrobial beta-defensins DEFB1, DEFB103A, and DEFB104A by mucosal epithelial cells, limiting the entry of microbes through the epithelial barriers. Involved in antiviral host defense through various mechanisms. Enhances immunity against West Nile virus by promoting T cell cytotoxicity. Contributes to Influenza virus clearance by driving the differentiation of B-1a B cells, providing for production of virus-specific IgM antibodies at first line of host defense. Receptor for IL17C as part of a heterodimeric complex with IL17RE. Its function is as follows. (Microbial infection) Receptor for SARS coronavirus-2/SARS-CoV-2 virus protein ORF8, leading to IL17 pathway activation and an increased secretion of pro-inflammatory factors through activating NF-kappa-B signaling pathway. This chain is Interleukin-17 receptor A, found in Homo sapiens (Human).